Reading from the N-terminus, the 377-residue chain is Lipoyl synthase, mitochondrial (377 aa).

Residues C98, C103, C109, C128, C132, C135, and S343 each coordinate [4Fe-4S] cluster. Positions 113–332 constitute a Radical SAM core domain; sequence KKSEATATIM…RDTALDMGFL (220 aa).

It belongs to the radical SAM superfamily. Lipoyl synthase family. [4Fe-4S] cluster is required as a cofactor.

Its subcellular location is the mitochondrion. The enzyme catalyses [[Fe-S] cluster scaffold protein carrying a second [4Fe-4S](2+) cluster] + N(6)-octanoyl-L-lysyl-[protein] + 2 oxidized [2Fe-2S]-[ferredoxin] + 2 S-adenosyl-L-methionine + 4 H(+) = [[Fe-S] cluster scaffold protein] + N(6)-[(R)-dihydrolipoyl]-L-lysyl-[protein] + 4 Fe(3+) + 2 hydrogen sulfide + 2 5'-deoxyadenosine + 2 L-methionine + 2 reduced [2Fe-2S]-[ferredoxin]. The protein operates within protein modification; protein lipoylation via endogenous pathway; protein N(6)-(lipoyl)lysine from octanoyl-[acyl-carrier-protein]: step 2/2. Functionally, catalyzes the radical-mediated insertion of two sulfur atoms into the C-6 and C-8 positions of the octanoyl moiety bound to the lipoyl domains of lipoate-dependent enzymes, thereby converting the octanoylated domains into lipoylated derivatives. The polypeptide is Lipoyl synthase, mitochondrial (Candida tropicalis (strain ATCC MYA-3404 / T1) (Yeast)).